We begin with the raw amino-acid sequence, 744 residues long: Tripartite motif-containing protein 3 (744 aa).

Alanine 2 carries the post-translational modification N-acetylalanine. Positions 2-290 (AKREDSPGPE…LAAQAFPERP (289 aa)) are interaction with KIF21B. Position 7 is a phosphoserine (serine 7). The segment at 22–63 (CSICLDRYRCPKVLPCLHTFCERCLQNYIPPQSLTLSCPVCR) adopts an RING-type zinc-finger fold. The segment at 110–151 (GRPLSCPNHEGKTMEFYCEACETAMCGECRAGEHREHGTVLL) adopts a B box-type zinc-finger fold. Positions 115, 118, 138, and 143 each coordinate Zn(2+). A coiled-coil region spans residues 153 to 224 (DVVEQHKAAL…RKQALVSDLE (72 aa)). Residues 317 to 418 (TTSATAHETV…VRGSPFRVRA (102 aa)) form a Filamin repeat. The segment at 419-464 (LRPGDLPPSPDDVKRRVKSPGGPGSHVRQKAVRRPSSMYSTGGKRK) is disordered. Serine 427 is modified (phosphoserine). NHL repeat units lie at residues 473–516 (VFRV…FSNE), 520–563 (KFRF…FSPE), 564–605 (GKFK…FQPN), 609–652 (VGRF…YSAD), 656–699 (LFKF…FDSS), and 700–743 (GSFL…YRYL).

Belongs to the TRIM/RBCC family. Forms homooligomers. Interacts with TRIM2; this interaction reduces TRIM2 activity. Associates with myosin-Vb (MYO5B) and alpha-actinin-4 (ACTN4). Component of the CART complex, at least composed of ACTN4, HGS/HRS, MYO5B and TRIM3. Interacts with ZFYVE28/LST2. Interacts with KIF21B.

The protein localises to the cytoplasm. Its subcellular location is the early endosome. It is found in the golgi apparatus. It localises to the trans-Golgi network. The protein resides in the cell projection. The protein localises to the dendrite. It carries out the reaction S-ubiquitinyl-[E2 ubiquitin-conjugating enzyme]-L-cysteine + [acceptor protein]-L-lysine = [E2 ubiquitin-conjugating enzyme]-L-cysteine + N(6)-ubiquitinyl-[acceptor protein]-L-lysine.. Functionally, E3 ubiquitin ligase that plays essential roles in neuronal functions such as regulation of neuronal plasticity, learning, and memory. In addition to its neuronal functions, participates in other biological processes such as innate immunity or cell cycle regulation. Component of the cytoskeleton-associated recycling or transport complex in neurons, polyubiquitinates gamma-actin, thus regulating neuronal plasticity, learning, and memory. Ubiquitinates postsynaptic scaffold GKAP, a neuronal substrate involved in synaptic remodeling and thereby modulates dendritic spine morphology. Positively regulates motility of microtubule-dependent motor protein KIF21B. Induces growth arrest via its RING-dependent E3 ligase activity and ubiquinates CDKN1A. Positively regulates TLR3-mediated signaling by mediating 'Lys-63'-linked polyubiquitination of TLR3. In turn, promotes the recognition and sorting of polyubiquitinated TLR3 by the ESCRT complexes. This is Tripartite motif-containing protein 3 (Trim3) from Mus musculus (Mouse).